Consider the following 512-residue polypeptide: Glycerol kinase (512 aa).

Residue Thr14 coordinates ADP. 3 residues coordinate ATP: Thr14, Thr15, and Ser16. Residue Thr14 coordinates sn-glycerol 3-phosphate. Arg18 provides a ligand contact to ADP. Residues Arg83, Glu84, Tyr135, and Asp244 each coordinate sn-glycerol 3-phosphate. Glycerol contacts are provided by Arg83, Glu84, Tyr135, Asp244, and Gln245. ADP contacts are provided by Thr266, Gly309, Gly410, and Asn414. Residues Thr266, Gly309, and Gly410 each contribute to the ATP site.

This sequence belongs to the FGGY kinase family.

The catalysed reaction is glycerol + ATP = sn-glycerol 3-phosphate + ADP + H(+). The protein operates within polyol metabolism; glycerol degradation via glycerol kinase pathway; sn-glycerol 3-phosphate from glycerol: step 1/1. With respect to regulation, inhibited by fructose 1,6-bisphosphate (FBP). Key enzyme in the regulation of glycerol uptake and metabolism. Catalyzes the phosphorylation of glycerol to yield sn-glycerol 3-phosphate. This Gluconobacter oxydans (strain 621H) (Gluconobacter suboxydans) protein is Glycerol kinase.